Consider the following 360-residue polypeptide: Phospho-N-acetylmuramoyl-pentapeptide-transferase (360 aa).

10 helical membrane passes run 21 to 41, 73 to 93, 94 to 114, 132 to 152, 168 to 188, 199 to 219, 239 to 259, 263 to 283, 288 to 308, and 338 to 358; these read YLSF…LWMG, TMGG…WADL, SNPY…VGFV, WKYF…YAHG, VMPQ…VGTS, GLAI…AWAT, LVVV…FNTY, VFMG…IAVL, LVLV…ILQV, and VIVR…ATLK.

The protein belongs to the glycosyltransferase 4 family. MraY subfamily. Mg(2+) serves as cofactor.

Its subcellular location is the cell inner membrane. It catalyses the reaction UDP-N-acetyl-alpha-D-muramoyl-L-alanyl-gamma-D-glutamyl-meso-2,6-diaminopimeloyl-D-alanyl-D-alanine + di-trans,octa-cis-undecaprenyl phosphate = di-trans,octa-cis-undecaprenyl diphospho-N-acetyl-alpha-D-muramoyl-L-alanyl-D-glutamyl-meso-2,6-diaminopimeloyl-D-alanyl-D-alanine + UMP. Its pathway is cell wall biogenesis; peptidoglycan biosynthesis. Its function is as follows. Catalyzes the initial step of the lipid cycle reactions in the biosynthesis of the cell wall peptidoglycan: transfers peptidoglycan precursor phospho-MurNAc-pentapeptide from UDP-MurNAc-pentapeptide onto the lipid carrier undecaprenyl phosphate, yielding undecaprenyl-pyrophosphoryl-MurNAc-pentapeptide, known as lipid I. This is Phospho-N-acetylmuramoyl-pentapeptide-transferase from Vibrio atlanticus (strain LGP32) (Vibrio splendidus (strain Mel32)).